The sequence spans 474 residues: Glycogen synthase (474 aa).

Lys-15 is a binding site for ADP-alpha-D-glucose.

The protein belongs to the glycosyltransferase 1 family. Bacterial/plant glycogen synthase subfamily.

The catalysed reaction is [(1-&gt;4)-alpha-D-glucosyl](n) + ADP-alpha-D-glucose = [(1-&gt;4)-alpha-D-glucosyl](n+1) + ADP + H(+). Its pathway is glycan biosynthesis; glycogen biosynthesis. Synthesizes alpha-1,4-glucan chains using ADP-glucose. The chain is Glycogen synthase from Chlamydia trachomatis serovar A (strain ATCC VR-571B / DSM 19440 / HAR-13).